The chain runs to 352 residues: Nicotinate-nucleotide--dimethylbenzimidazole phosphoribosyltransferase (352 aa).

E316 serves as the catalytic Proton acceptor.

The protein belongs to the CobT family.

It catalyses the reaction 5,6-dimethylbenzimidazole + nicotinate beta-D-ribonucleotide = alpha-ribazole 5'-phosphate + nicotinate + H(+). It participates in nucleoside biosynthesis; alpha-ribazole biosynthesis; alpha-ribazole from 5,6-dimethylbenzimidazole: step 1/2. Functionally, catalyzes the synthesis of alpha-ribazole-5'-phosphate from nicotinate mononucleotide (NAMN) and 5,6-dimethylbenzimidazole (DMB). The polypeptide is Nicotinate-nucleotide--dimethylbenzimidazole phosphoribosyltransferase (Clostridium acetobutylicum (strain ATCC 824 / DSM 792 / JCM 1419 / IAM 19013 / LMG 5710 / NBRC 13948 / NRRL B-527 / VKM B-1787 / 2291 / W)).